A 522-amino-acid polypeptide reads, in one-letter code: Hydroxymethylglutaryl-CoA synthase, cytoplasmic (522 aa).

Residues D43 and A44 each contribute to the (3S)-3-hydroxy-3-methylglutaryl-CoA site. Catalysis depends on E95, which acts as the Proton donor/acceptor. (3S)-3-hydroxy-3-methylglutaryl-CoA contacts are provided by C129, N167, T171, S221, H264, K273, N344, and S378. C129 functions as the Acyl-thioester intermediate in the catalytic mechanism. H264 (proton donor/acceptor) is an active-site residue.

Belongs to the thiolase-like superfamily. HMG-CoA synthase family. As to quaternary structure, homodimer.

Its subcellular location is the cytoplasm. It catalyses the reaction acetoacetyl-CoA + acetyl-CoA + H2O = (3S)-3-hydroxy-3-methylglutaryl-CoA + CoA + H(+). It participates in metabolic intermediate biosynthesis; (R)-mevalonate biosynthesis; (R)-mevalonate from acetyl-CoA: step 2/3. In terms of biological role, catalyzes the condensation of acetyl-CoA with acetoacetyl-CoA to form HMG-CoA, which is converted by HMG-CoA reductase (HMGCR) into mevalonate, a precursor for cholesterol synthesis. This is Hydroxymethylglutaryl-CoA synthase, cytoplasmic (HMGCS1) from Gallus gallus (Chicken).